The primary structure comprises 648 residues: A-type voltage-gated potassium channel KCND1 (648 aa).

Residues 1–183 (MAAGVATWLP…RAFENPHTST (183 aa)) are Cytoplasmic-facing. The tract at residues 2 to 20 (AAGVATWLPFARAAAVGWL) is interaction with KCNIP1, KCNIP2, and other family members. Residues 2–20 (AAGVATWLPFARAAAVGWL) are interaction with KCNIP2. Zn(2+) contacts are provided by H104, C131, and C132. The interval 144-164 (AERLAEDEEAEQAGDGPTLPA) is disordered. A helical transmembrane segment spans residues 184–205 (AALVFYYVTGFFIAVSVIANVV). At 206-230 (ETIPCRSPTRRPPREQPCGDRFPLA) the chain is on the extracellular side. Residues 231-252 (FFCMDTACVLIFTGEYLLRLFA) form a helical membrane-spanning segment. Over 253–263 (APSRCRFLRSV) the chain is Cytoplasmic. A helical transmembrane segment spans residues 264-284 (MSLIDVVAILPYYIGLFMPKN). At 285–287 (EDV) the chain is on the extracellular side. The helical; Voltage-sensor transmembrane segment at 288–308 (SGAFVTLRVFRVFRIFKFSRH) threads the bilayer. Residues 309-323 (SQGLRILGYTLKSCA) are Cytoplasmic-facing. Residues 310-323 (QGLRILGYTLKSCA) form an S4-S5 linker region. A helical membrane pass occupies residues 324–345 (SELGFLLFSLTMAIIIFATVMF). Over 346 to 359 (YAEKGTNKTNFTSI) the chain is Extracellular. N-linked (GlcNAc...) asparagine glycosylation is found at N352 and N355. The segment at residues 360-371 (PAAFWYTIVTMT) is an intramembrane region (helical). Positions 372 to 377 (TLGYGD) match the Selectivity filter motif. An intramembrane segment occupies 372–379 (TLGYGDMV). Residues 380-386 (PSTIAGK) are Extracellular-facing. A helical transmembrane segment spans residues 387–415 (IFGSICSLSGVLVIALPVPVIVSNFSRIY). The Cytoplasmic segment spans residues 416 to 648 (HQNQRADKRR…LPETVKISSL (233 aa)). S458 bears the Phosphoserine mark. Positions 474–489 (FEQQHHHLLHCLEKTT) are mediates dendritic targeting. The required for dendritic targeting stretch occupies residues 474-489 (FEQQHHHLLHCLEKTT). A Phosphoserine modification is found at S555. The tract at residues 601 to 636 (IPTPPANTPDESQPSSPGGGGGGASSTLRNSSLGTP) is disordered.

The protein belongs to the potassium channel family. D (Shal) (TC 1.A.1.2) subfamily. Kv4.1/KCND1 sub-subfamily. In terms of assembly, component of heteromultimeric potassium channels. Identified in potassium channel complexes containing KCND1, KCND2, KCND3, KCNIP1, KCNIP2, KCNIP3, KCNIP4, DPP6 and DPP10.

Its subcellular location is the cell membrane. The catalysed reaction is K(+)(in) = K(+)(out). Functionally, A-type voltage-gated potassium channel that mediates transmembrane potassium transport in excitable membranes in the brain. Mediates A-type current I(SA) in suprachiasmatic nucleus (SCN) neurons. Exhibits a low-threshold A-type current with a hyperpolarized steady-state inactivation midpoint and the recovery process was steeply voltage-dependent, with recovery being markedly faster at more negative potentials. May regulates repetitive firing rates in the suprachiasmatic nucleus (SCN) neurons and circadian rhythms in neuronal excitability and behavior. Contributes to the regulation of the circadian rhythm of action potential firing in suprachiasmatic nucleus neurons, which regulates the circadian rhythm of locomotor activity. The regulatory subunit KCNIP1 modulates the kinetics of channel inactivation, increases the current amplitudes and accelerates recovery from inactivation, shifts activation in a depolarizing direction. The regulatory subunit DPP10 decreases the voltage sensitivity of the inactivation channel gating. The sequence is that of A-type voltage-gated potassium channel KCND1 from Bos taurus (Bovine).